Reading from the N-terminus, the 1188-residue chain is Meiotically up-regulated gene 190 protein (1188 aa).

Residues 1 to 11 (MSTHSGDSTKQ) are compositionally biased toward polar residues. Disordered regions lie at residues 1–61 (MSTH…DPIT) and 83–125 (FTVP…EADN). The span at 41–61 (EKKEEQQREQTENEKLFDPIT) shows a compositional bias: basic and acidic residues. The segment covering 84–112 (TVPNQSIQGSSLPSEKPYLSSNQPTNVYK) has biased composition (polar residues). The chain crosses the membrane as a helical span at residues 173 to 193 (LVISWFFTHSIIISAVLPLAI). The SMP-LTD domain maps to 228–453 (IPESAEWMNH…SPKSMTIDLS (226 aa)). The tract at residues 298-318 (ASESFSEKQASEAEHKDEPEQ) is disordered. Residues 302-318 (FSEKQASEAEHKDEPEQ) show a composition bias toward basic and acidic residues. C2 domains lie at 451–576 (DLSK…ERCD) and 636–781 (KEEE…TKWY). Residues Asp-485, Asp-491, Asp-544, Asp-546, Ser-549, and Asp-552 each coordinate Ca(2+). Disordered stretches follow at residues 615–639 (TIPR…KEEE) and 1002–1066 (QRAS…GTMN). Ser-1005 carries the post-translational modification Phosphoserine. The segment covering 1022-1032 (DDSVDTEDEET) has biased composition (acidic residues).

Ca(2+) serves as cofactor.

It localises to the cytoplasm. The protein resides in the endoplasmic reticulum membrane. Its subcellular location is the nucleus membrane. The protein localises to the cytoskeleton. It is found in the microtubule organizing center. It localises to the spindle pole body. Functionally, has a role in meiosis. The sequence is that of Meiotically up-regulated gene 190 protein (mug190) from Schizosaccharomyces pombe (strain 972 / ATCC 24843) (Fission yeast).